The primary structure comprises 28 residues: 50 kDa venom protease (28 aa).

It belongs to the venom metalloproteinase (M12B) family. Requires Zn(2+) as cofactor. Expressed by the venom gland.

It localises to the secreted. In Proatheris superciliaris (Lowland swamp viper), this protein is 50 kDa venom protease.